The sequence spans 307 residues: Hepatitis A virus cellular receptor 1 homolog (307 aa).

Positions 1 to 21 are cleaved as a signal peptide; sequence MVQLQVFISGLLLLLPGSVDS. The Ig-like V-type domain maps to 22-124; the sequence is YEVVKGVVGH…WFNDQKMTFS (103 aa). At 22–235 the chain is on the extracellular side; it reads YEVVKGVVGH…RKPQRNPTKG (214 aa). Cystine bridges form between Cys37-Cys108, Cys49-Cys60, and Cys55-Cys107. A disordered region spans residues 129–177; it reads PEIPTSPPTRPTTTRPTTTRPTTISTRSTHVPTSTRVSTSTPTPEQTQT. Residues 139–175 are compositionally biased toward low complexity; it reads PTTTRPTTTRPTTISTRSTHVPTSTRVSTSTPTPEQT. Asn206 carries N-linked (GlcNAc...) asparagine glycosylation. Residues 236-256 form a helical membrane-spanning segment; sequence FYVGMSVAALLLLLLASTVVV. Residues 257-307 lie on the Cytoplasmic side of the membrane; that stretch reads TRYIIIRKKMGSLSFVAFHVSKSRALQNAAIVHPRAEDNIYIIEDRSRGAE.

It belongs to the immunoglobulin superfamily. TIM family. Interacts with STAM. Interacts with SELPLG. In terms of tissue distribution, expressed at a low level in normal kidney but are increased dramatically in postischemic kidney. Expressed in proliferating bromodeoxyuridine-positive and dedifferentiated vimentin-positive epithelial cells in regenerating proximal tubules.

It is found in the cell membrane. Phosphatidylserine receptor that plays an important functional role in regulatory B-cells homeostasis including generation, expansion and suppressor functions. As P-selectin/SELPLG ligand, plays a specialized role in activated but not naive T-cell trafficking during inflammatory responses. Controls thereby T-cell accumulation in the inflamed central nervous system (CNS) and the induction of autoimmune disease. Also regulates expression of various anti-inflammatory cytokines and co-inhibitory ligands including IL10. Acts as a regulator of T-cell proliferation. May play a role in kidney injury and repair. In Rattus norvegicus (Rat), this protein is Hepatitis A virus cellular receptor 1 homolog (Havcr1).